The following is an 85-amino-acid chain: Beta-insect depressant toxin Lqh-dprIT3h (85 aa).

The signal sequence occupies residues 1-21; sequence MKLLLLLTISASMLIEGLVNA. Positions 22 to 82 constitute an LCN-type CS-alpha/beta domain; that stretch reads DGYIRGGDGC…EWDYETDTCG (61 aa). Disulfide bonds link Cys-31/Cys-81, Cys-35/Cys-56, Cys-42/Cys-63, and Cys-46/Cys-65. Glycine amide is present on Gly-82.

Belongs to the long (4 C-C) scorpion toxin superfamily. Sodium channel inhibitor family. Beta subfamily. As to expression, expressed by the venom gland.

Its subcellular location is the secreted. Its function is as follows. Depressant insect beta-toxins cause a transient contraction paralysis followed by a slow flaccid paralysis. They bind voltage-independently at site-4 of sodium channels (Nav) and block action potentials, primarily by depolarizing the axonal membrane and suppressing the sodium current. This depressant toxin is active only on insects. It is found in a relatively small amount in the venom. In Leiurus hebraeus (Hebrew deathstalker scorpion), this protein is Beta-insect depressant toxin Lqh-dprIT3h.